A 351-amino-acid chain; its full sequence is Cyclic AMP-dependent transcription factor ATF-4 (351 aa).

Lys53 is covalently cross-linked (Glycyl lysine isopeptide (Lys-Gly) (interchain with G-Cter in SUMO2)). Residues Glu210 to Met268 form a disordered region. Thr213 carries the phosphothreonine modification. At Ser215 the chain carries Phosphoserine; by CK2. Residues Ser215–Ser224 carry the BetaTrCP degron motif motif. Phosphoserine is present on residues Ser219, Ser224, Ser231, and Ser235. Polar residues predominate over residues Gly230 to Leu246. A 4-hydroxyproline modification is found at Pro236. Ser245 carries the post-translational modification Phosphoserine; by RPS6KA3. Ser248 is subject to Phosphoserine. Residues Lys259, Lys267, and Lys272 each participate in a glycyl lysine isopeptide (Lys-Gly) (interchain with G-Cter in SUMO2) cross-link. Positions Leu278–Val341 constitute a bZIP domain. Positions Lys280–Arg300 are basic motif. Residues Lys280–Glu340 adopt a coiled-coil conformation. Residues Ala305–Val341 form an interaction with GABBR1 region. Residues Leu306–Leu334 form a leucine-zipper region. Lys311 carries the N6-acetyllysine modification.

The protein belongs to the bZIP family. As to quaternary structure, binds DNA as a homodimer and as a heterodimer. Heterodimer; heterodimerizes with CEBPB. Heterodimer; heterodimerizes with DDIT3/CHOP. Interacts with CEP290 (via an N-terminal region). Interacts with NEK6, DAPK2 (isoform 2) and ZIPK/DAPK3. Interacts (via its leucine zipper domain) with GABBR1 and GABBR2 (via their C-termini). Forms a heterodimer with TXLNG in osteoblasts. Interacts (via its DNA binding domain) with FOXO1 (C-terminal half); the interaction occurs in osteoblasts and regulates glucose homeostasis through suppression of beta-cell proliferation and a decrease in insulin production. Interacts with SATB2; the interaction results in enhanced DNA binding and transactivation by these transcription factors. Interacts with ABRAXAS2. Interacts with TRIB3, inhibiting the transactivation activity of ATF4. Interacts with DISC1; which inhibits ATF4 transcription factor activity by disrupting ATF4 dimerization and DNA-binding. Interacts with EP300/p300; EP300/p300 stabilizes ATF4 and increases its transcriptional activity independently of its catalytic activity by preventing its ubiquitination. In terms of processing, ubiquitinated by SCF(BTRC) in response to mTORC1 signal, followed by proteasomal degradation and leading to down-regulate expression of SIRT4. Interaction with EP300/p300 inhibits ubiquitination by SCF(BTRC). Post-translationally, phosphorylation at Ser-245 by RPS6KA3/RSK2 in osteoblasts enhances transactivation activity and promotes osteoblast differentiation. Phosphorylated on the betaTrCP degron motif at Ser-219, followed by phosphorylation at Thr-213, Ser-224, Ser-231, Ser-235 and Ser-248, promoting interaction with BTRC and ubiquitination. Phosphorylation is promoted by mTORC1. Phosphorylation at Ser-215 by CK2 decreases its stability. Phosphorylated by NEK6. Hydroxylated by PHD3, leading to decreased protein stability.

The protein localises to the nucleus. Its subcellular location is the nucleus speckle. It is found in the cytoplasm. The protein resides in the cell membrane. It localises to the cytoskeleton. The protein localises to the microtubule organizing center. Its subcellular location is the centrosome. In terms of biological role, transcription factor that binds the cAMP response element (CRE) (consensus: 5'-GTGACGT[AC][AG]-3') and displays two biological functions, as regulator of metabolic and redox processes under normal cellular conditions, and as master transcription factor during integrated stress response (ISR). Binds to asymmetric CRE's as a heterodimer and to palindromic CRE's as a homodimer. Core effector of the ISR, which is required for adaptation to various stress such as endoplasmic reticulum (ER) stress, amino acid starvation, mitochondrial stress or oxidative stress. During ISR, ATF4 translation is induced via an alternative ribosome translation re-initiation mechanism in response to EIF2S1/eIF-2-alpha phosphorylation, and stress-induced ATF4 acts as a master transcription factor of stress-responsive genes in order to promote cell recovery. Promotes the transcription of genes linked to amino acid sufficiency and resistance to oxidative stress to protect cells against metabolic consequences of ER oxidation. Activates the transcription of NLRP1, possibly in concert with other factors in response to ER stress. Activates the transcription of asparagine synthetase (ASNS) in response to amino acid deprivation or ER stress. However, when associated with DDIT3/CHOP, the transcriptional activation of the ASNS gene is inhibited in response to amino acid deprivation. Together with DDIT3/CHOP, mediates programmed cell death by promoting the expression of genes involved in cellular amino acid metabolic processes, mRNA translation and the terminal unfolded protein response (terminal UPR), a cellular response that elicits programmed cell death when ER stress is prolonged and unresolved. Activates the expression of COX7A2L/SCAF1 downstream of the EIF2AK3/PERK-mediated unfolded protein response, thereby promoting formation of respiratory chain supercomplexes and increasing mitochondrial oxidative phosphorylation. Together with DDIT3/CHOP, activates the transcription of the IRS-regulator TRIB3 and promotes ER stress-induced neuronal cell death by regulating the expression of BBC3/PUMA in response to ER stress. May cooperate with the UPR transcriptional regulator QRICH1 to regulate ER protein homeostasis which is critical for cell viability in response to ER stress. In the absence of stress, ATF4 translation is at low levels and it is required for normal metabolic processes such as embryonic lens formation, fetal liver hematopoiesis, bone development and synaptic plasticity. Acts as a regulator of osteoblast differentiation in response to phosphorylation by RPS6KA3/RSK2: phosphorylation in osteoblasts enhances transactivation activity and promotes expression of osteoblast-specific genes and post-transcriptionally regulates the synthesis of Type I collagen, the main constituent of the bone matrix. Cooperates with FOXO1 in osteoblasts to regulate glucose homeostasis through suppression of beta-cell production and decrease in insulin production. Activates transcription of SIRT4. Regulates the circadian expression of the core clock component PER2 and the serotonin transporter SLC6A4. Binds in a circadian time-dependent manner to the cAMP response elements (CRE) in the SLC6A4 and PER2 promoters and periodically activates the transcription of these genes. Mainly acts as a transcriptional activator in cellular stress adaptation, but it can also act as a transcriptional repressor: acts as a regulator of synaptic plasticity by repressing transcription, thereby inhibiting induction and maintenance of long-term memory. Regulates synaptic functions via interaction with DISC1 in neurons, which inhibits ATF4 transcription factor activity by disrupting ATF4 dimerization and DNA-binding. (Microbial infection) Binds to a Tax-responsive enhancer element in the long terminal repeat of HTLV-I. This Homo sapiens (Human) protein is Cyclic AMP-dependent transcription factor ATF-4.